Reading from the N-terminus, the 409-residue chain is Multidrug efflux pump Tap (409 aa).

Helical transmembrane passes span 10-30, 46-66, 80-98, 104-123, 144-168, 174-193, 218-240, 260-282, 289-308, 313-335, 348-370, and 375-397; these read LLIL…IVAF, IVAM…GAAV, LLSA…IFGV, AVLA…GMTA, SVYE…IATL, MWVT…VLRL, FVWY…GLYM, LGWV…AVMS, ATML…IAFL, LILV…YNYV, VVGV…AGPL, and GLHA…AVFL.

The protein belongs to the major facilitator superfamily. Drug:H(+) antiporter-3 (DHA3) (TC 2.A.1.21) family.

It localises to the cell inner membrane. With respect to regulation, efflux activity is inhibited by carbonyl cyanide m-chlorophenylhydrazone (CCCP) and reserpine, but not by o-vanadate or chlorpromazine (CPZ). Efflux pump that contributes to intrinsic antibiotic resistance. The pump uses the electrochemical gradient as a source of energy. Confers low-level resistance to tetracycline and to several aminoglycosides, including streptomycin, gentamicin, 2'-N-ethylnetilmicin and 6'-N-ethylnetilmicin. The chain is Multidrug efflux pump Tap from Mycolicibacterium fortuitum (Mycobacterium fortuitum).